The following is a 121-amino-acid chain: MLTNNQLLKHSRIKKKKQSYNFYTKPQIKGLCIKVFTRTPKKPNSALRKIAKIKLKNKKEILAYIPGEGHALQDHNFVLIKKGRVQDLPGIKYKVIRGVLDTIGVLNRKSSRSKYGTKKII.

This sequence belongs to the universal ribosomal protein uS12 family. Part of the 30S ribosomal subunit.

It is found in the plastid. The protein resides in the apicoplast. Functionally, with S4 and S5 plays an important role in translational accuracy. Located at the interface of the 30S and 50S subunits. This chain is Small ribosomal subunit protein uS12c (rps12), found in Toxoplasma gondii.